We begin with the raw amino-acid sequence, 967 residues long: Isoleucine--tRNA ligase 2 (967 aa).

The 'HIGH' region signature appears at 58-68 (PYANGDIHIGH). The segment at 430–463 (EADPGRADVTEEAGATGEARKVGKAEEAEEAGPV) is disordered. Position 598 (Glu598) interacts with L-isoleucyl-5'-AMP. The 'KMSKS' region signature appears at 639–643 (KMSKS). Lys642 provides a ligand contact to ATP. 4 residues coordinate Zn(2+): Cys922, Cys925, Cys942, and Cys945.

Belongs to the class-I aminoacyl-tRNA synthetase family. IleS type 1 subfamily. Monomer. Requires Zn(2+) as cofactor.

The protein localises to the cytoplasm. It catalyses the reaction tRNA(Ile) + L-isoleucine + ATP = L-isoleucyl-tRNA(Ile) + AMP + diphosphate. Its function is as follows. Catalyzes the attachment of isoleucine to tRNA(Ile). As IleRS can inadvertently accommodate and process structurally similar amino acids such as valine, to avoid such errors it has two additional distinct tRNA(Ile)-dependent editing activities. One activity is designated as 'pretransfer' editing and involves the hydrolysis of activated Val-AMP. The other activity is designated 'posttransfer' editing and involves deacylation of mischarged Val-tRNA(Ile). The protein is Isoleucine--tRNA ligase 2 of Burkholderia pseudomallei (strain K96243).